Consider the following 537-residue polypeptide: RNA polymerase sigma-54 factor 2 (537 aa).

Residues 52 to 90 (ANDEASGGEAPAEAGQFSDSDGGHNDEPGGGPGEAFEPG) are disordered. The segment covering 55-66 (EASGGEAPAEAG) has biased composition (low complexity). Residues 403 to 422 (NLKAVADAIQMHESTVSRVT) constitute a DNA-binding region (H-T-H motif). The RPON box motif lies at 492 to 500 (ARRTVAKYR). The disordered stretch occupies residues 507-537 (SSVQRRRDKQSALGNVLSTAMSDRSRNPEPA). Residues 518–528 (ALGNVLSTAMS) are compositionally biased toward polar residues.

This sequence belongs to the sigma-54 factor family.

In terms of biological role, sigma factors are initiation factors that promote the attachment of RNA polymerase to specific initiation sites and are then released. This sigma factor is responsible for the expression of the nitrogen fixation genes. The sequence is that of RNA polymerase sigma-54 factor 2 (rpoN2) from Bradyrhizobium diazoefficiens (strain JCM 10833 / BCRC 13528 / IAM 13628 / NBRC 14792 / USDA 110).